The primary structure comprises 1013 residues: Poly [ADP-ribose] polymerase 1 (1013 aa).

Ala2 is modified (N-acetylalanine). The segment at 9–93 (YRVEYAKSGR…KVKKTAEAGG (85 aa)) adopts a PARP-type 1 zinc-finger fold. The Zn(2+) site is built by Cys21 and Cys24. Ser41 bears the Phosphoserine mark. Positions 53 and 56 each coordinate Zn(2+). N6-acetyllysine is present on residues Lys97 and Lys105. The segment at 113–203 (FAAEYAKSNR…VLKKQLPGVK (91 aa)) adopts a PARP-type 2 zinc-finger fold. Zn(2+) is bound by residues Cys125 and Cys128. At Lys131 the chain carries N6-acetyllysine. Zn(2+)-binding residues include His159 and Cys162. A phosphoserine mark is found at Ser177, Ser179, and Ser185. Lys192 is covalently cross-linked (Glycyl lysine isopeptide (Lys-Gly) (interchain with G-Cter in SUMO2)). A disordered region spans residues 198 to 233 (QLPGVKSEGKRKGDEVDGADEVAKKKSKKGKDKDSK). Lys203 is covalently cross-linked (Glycyl lysine isopeptide (Lys-Gly) (interchain with G-Cter in SUMO1); alternate). Lys203 participates in a covalent cross-link: Glycyl lysine isopeptide (Lys-Gly) (interchain with G-Cter in SUMO2); alternate. Short sequence motifs (nuclear localization signal) lie at residues 207-209 (KRK) and 221-226 (KKKSKK). The PADR1 zinc-binding domain maps to 225 to 359 (KKGKDKDSKL…VKKQDRIFPP (135 aa)). Lys249 participates in a covalent cross-link: Glycyl lysine isopeptide (Lys-Gly) (interchain with G-Cter in SUMO2). Residues Ser274 and Ser277 each carry the phosphoserine modification. The tract at residues 290 to 332 (GALLPCKECSGQLVFKSDAYYCTGDVTAWTKCMVKTQTPSRKE) is zinc ribbon. The Zn(2+) site is built by Cys295, Cys298, Cys311, and Cys321. The disordered stretch occupies residues 357–383 (FPPETSAPAPPHLPPSVTSAPTAVNSS). The segment covering 372-383 (SVTSAPTAVNSS) has biased composition (polar residues). Residues 373–523 (VTSAPTAVNS…GVNKSEKRMK (151 aa)) are automodification domain. Residues 385 to 476 (PADKPLSNMK…KSLQELLSAH (92 aa)) enclose the BRCT domain. Asp387 bears the PolyADP-ribosyl aspartic acid mark. A polyADP-ribosyl glutamic acid mark is found at Glu407, Glu413, Glu435, Glu437, Glu444, Glu445, and Glu456. Residue Lys467 forms a Glycyl lysine isopeptide (Lys-Gly) (interchain with G-Cter in SUMO2) linkage. Glu471 and Glu484 each carry polyADP-ribosyl glutamic acid. A Glycyl lysine isopeptide (Lys-Gly) (interchain with G-Cter in SUMO1); alternate cross-link involves residue Lys486. Lys486 participates in a covalent cross-link: Glycyl lysine isopeptide (Lys-Gly) (interchain with G-Cter in SUMO2); alternate. Residues Glu488 and Glu491 each carry the polyADP-ribosyl glutamic acid modification. The interval 495–516 (PKGKSAAPSKKSKGLYKEEGVN) is disordered. ADP-ribosylserine occurs at positions 499, 503, and 506. Lys511 participates in a covalent cross-link: Glycyl lysine isopeptide (Lys-Gly) (interchain with G-Cter in SUMO2). PolyADP-ribosyl glutamic acid occurs at positions 512 and 513. Ser518 carries the ADP-ribosylserine modification. Glu519 is subject to PolyADP-ribosyl glutamic acid. Lys520 carries the N6-(ADP-ribosyl)lysine modification. Lys527 is covalently cross-linked (Glycyl lysine isopeptide (Lys-Gly) (interchain with G-Cter in SUMO2)). The region spanning 541-637 (SAHVLEKGGK…KNFTKYPKKF (97 aa)) is the WGR domain. Residue Thr593 is modified to Phosphothreonine. N6-acetyllysine is present on residues Lys599 and Lys620. Residues 661–778 (KSKLPKAVQE…DIEVAYSLLR (118 aa)) enclose the PARP alpha-helical domain. Lys747 is covalently cross-linked (Glycyl lysine isopeptide (Lys-Gly) (interchain with G-Cter in SUMO1); alternate). Lys747 participates in a covalent cross-link: Glycyl lysine isopeptide (Lys-Gly) (interchain with G-Cter in SUMO2); alternate. 2 positions are modified to phosphoserine: Ser781 and Ser785. Positions 787-1013 (DPIDVNYEKL…LKFNFKTSLW (227 aa)) constitute a PARP catalytic domain. NAD(+)-binding positions include 861–863 (HGS), Gly870, Arg877, and Ser903. Residue Glu987 is the For poly [ADP-ribose] polymerase activity of the active site.

It belongs to the ARTD/PARP family. As to quaternary structure, homodimer; PARP-type zinc-fingers from separate PARP1 molecules form a dimer module that specifically recognizes DNA strand breaks. Heterodimer; heterodimerizes with PARP2. Interacts (via the PARP catalytic domain) with HPF1. Interacts with NMNAT1. Interacts with nucleosomes; with a preference for nucleosomes containing H2A.X. Interacts with APTX. Component of a base excision repair (BER) complex, containing at least XRCC1, PARP1, PARP2, POLB and LRIG3. Interacts with SRY. The SWAP complex consists of NPM1, NCL, PARP1 and SWAP70. Interacts with TIAM2. Interacts with PARP3; leading to activate PARP1 in absence of DNA. Interacts (when poly-ADP-ribosylated) with CHD1L (via macro domain). Interacts with the DNA polymerase alpha catalytic subunit POLA1; this interaction functions as part of the control of replication fork progression. Interacts with EEF1A1 and TXK. Interacts with RNF4. Interacts with RNF146. Interacts with ZNF423. Interacts with APLF. Interacts with SNAI1 (via zinc fingers); the interaction requires SNAI1 to be poly-ADP-ribosylated and non-phosphorylated (active) by GSK3B. Interacts (when poly-ADP-ribosylated) with PARP9. Interacts with NR4A3; activates PARP1 by improving acetylation of PARP1 and suppressing the interaction between PARP1 and SIRT1. Interacts (via catalytic domain) with PUM3; the interaction inhibits the poly-ADP-ribosylation activity of PARP1 and the degradation of PARP1 by CASP3 following genotoxic stress. Interacts with ZNF365. Interacts with RRP1B. Interacts with TIMELESS; the interaction is direct. Interacts with CGAS; leading to impede the formation of the PARP1-TIMELESS complex. Interacts with KHDC3L, the interaction is increased following the formation of DNA double-strand breaks. Interacts (when auto-poly-ADP-ribosylated) with XRCC1; leading to inhibit PARP1 ADP-ribosyltransferase activity. Interacts with SPINDOC; promoting PARP1 ADP-ribosyltransferase activity. Interacts with BANF1; leading to inhibit PARP1 ADP-ribosyltransferase activity in response to oxidative DNA damage. Interacts (when sumoylated and ubiquitinated) with VCP/p97; leading to its extraction from chromatin. Interacts with YARS1; promoting PARP1 ADP-ribosyltransferase activity. Interacts with PACMP micropeptide; Interacts with PACMP micropeptide; interaction. Interacts (when poly-ADP-ribosylated) with isoform 1 of MACROH2A1; MACROH2A1 specifically binds to poly-ADP-ribose chains and inhibits PARP1 activity, limiting the consumption of nuclear NAD(+). Interacts with CARM1; promoting recruitment to replication forks. Interacts with RECQL. Interacts with ZNF32; the interaction reshapes ZNF432 interacting proteins. Interacts with TPRN; TPRN interacts with a number of DNA damage response proteins, is recruited to sites of DNA damage and may play a role in DNA damage repair. Interacts (when auto-poly-ADP-ribosylated) with AIFM1. In terms of processing, poly-ADP-ribosylated on serine, glutamate and aspartate residues by autocatalysis. Auto-ADP-ribosylation on serine takes place following interaction with HPF1. Auto poly-ADP-ribosylation on serine residues promotes its dissociation from chromatin. Poly-ADP-ribosylated by PARP2; poly-ADP-ribosylation mediates the recruitment of CHD1L to DNA damage sites. Mono-ADP-ribosylated at Lys-520 by SIRT6 in response to oxidative stress, promoting recruitment to double-strand breaks (DSBs) sites. Post-translationally, S-nitrosylated, leading to inhibit transcription regulation activity. Phosphorylated at Thr-593 by PRKDC in response to DNA damage following virus infection, promoting its translocation to the cytosol. Phosphorylated by TXK. In terms of processing, proteolytically cleaved by caspase-3 (CASP3) and caspase-7 (CASP7) in response to apoptosis to generate the Poly [ADP-ribose] polymerase 1, processed N-terminus and Poly [ADP-ribose] polymerase 1, processed C-terminus forms. Post-translationally, sumoylated with SUMO1 or SUMO2 by PIAS4 following prolonged residence (trapping) to chromatin. Sumoylation promotes ubiquitination by RNF4 and removal from chromatin by VCP/p97. Ubiquitinated by RNF4 following sumoylation by PIAS4 in response to prolonged residence (trapping) to chromatin. Ubiquitination promotes removal from chromatin by VCP/p97.

It localises to the chromosome. The protein resides in the nucleus. The protein localises to the nucleolus. Its subcellular location is the cytoplasm. It is found in the cytosol. The enzyme catalyses NAD(+) + (ADP-D-ribosyl)n-acceptor = nicotinamide + (ADP-D-ribosyl)n+1-acceptor + H(+).. The catalysed reaction is L-seryl-[protein] + NAD(+) = O-(ADP-D-ribosyl)-L-seryl-[protein] + nicotinamide + H(+). It catalyses the reaction L-aspartyl-[protein] + NAD(+) = 4-O-(ADP-D-ribosyl)-L-aspartyl-[protein] + nicotinamide. It carries out the reaction L-glutamyl-[protein] + NAD(+) = 5-O-(ADP-D-ribosyl)-L-glutamyl-[protein] + nicotinamide. The enzyme catalyses L-tyrosyl-[protein] + NAD(+) = O-(ADP-D-ribosyl)-L-tyrosyl-[protein] + nicotinamide + H(+). The catalysed reaction is L-histidyl-[protein] + NAD(+) = N(tele)-(ADP-D-ribosyl)-L-histidyl-[protein] + nicotinamide + H(+). With respect to regulation, ADP-ribosyltransferase activity is regulated via an allosteric activation mechanism. In absence of activation signal, PARP1 is autoinhibited by the PARP alpha-helical domain (also named HD region), which prevents effective NAD(+)-binding. Activity is highly stimulated by signals, such as DNA strand breaks. Binding to damaged DNA unfolds the PARP alpha-helical domain, relieving autoinhibition. Poly-ADP-ribosyltransferase activity is tightly regulated and PARP1 is removed from damaged chromatin following initial poly-ADP-ribosylation of chromatin to avoid prolonged residence (trapping) that has cytotoxic consequences. A number of factors (VCP/p97) or post-translational modifications (auto-poly-ADP-ribosylation or ubiquitination) promote PARP1 removal from chromatin. Its function is as follows. Poly-ADP-ribosyltransferase that mediates poly-ADP-ribosylation of proteins and plays a key role in DNA repair. Mediates glutamate, aspartate, serine, histidine or tyrosine ADP-ribosylation of proteins: the ADP-D-ribosyl group of NAD(+) is transferred to the acceptor carboxyl group of target residues and further ADP-ribosyl groups are transferred to the 2'-position of the terminal adenosine moiety, building up a polymer with an average chain length of 20-30 units. Serine ADP-ribosylation of proteins constitutes the primary form of ADP-ribosylation of proteins in response to DNA damage. Specificity for the different amino acids is conferred by interacting factors, such as HPF1 and NMNAT1. Following interaction with HPF1, catalyzes serine ADP-ribosylation of target proteins; HPF1 confers serine specificity by completing the PARP1 active site. Also catalyzes tyrosine ADP-ribosylation of target proteins following interaction with HPF1. Following interaction with NMNAT1, catalyzes glutamate and aspartate ADP-ribosylation of target proteins; NMNAT1 confers glutamate and aspartate specificity. PARP1 initiates the repair of DNA breaks: recognizes and binds DNA breaks within chromatin and recruits HPF1, licensing serine ADP-ribosylation of target proteins, such as histones (H2BS6ADPr and H3S10ADPr), thereby promoting decompaction of chromatin and the recruitment of repair factors leading to the reparation of DNA strand breaks. HPF1 initiates serine ADP-ribosylation but restricts the polymerase activity of PARP1 in order to limit the length of poly-ADP-ribose chains. In addition to base excision repair (BER) pathway, also involved in double-strand breaks (DSBs) repair: together with TIMELESS, accumulates at DNA damage sites and promotes homologous recombination repair by mediating poly-ADP-ribosylation. Mediates the poly-ADP-ribosylation of a number of proteins, including itself, APLF, CHFR and NFAT5. In addition to proteins, also able to ADP-ribosylate DNA: catalyzes ADP-ribosylation of DNA strand break termini containing terminal phosphates and a 2'-OH group in single- and double-stranded DNA, respectively. Required for PARP9 and DTX3L recruitment to DNA damage sites. PARP1-dependent PARP9-DTX3L-mediated ubiquitination promotes the rapid and specific recruitment of 53BP1/TP53BP1, UIMC1/RAP80, and BRCA1 to DNA damage sites. PARP1-mediated DNA repair in neurons plays a role in sleep: senses DNA damage in neurons and promotes sleep, facilitating efficient DNA repair. In addition to DNA repair, also involved in other processes, such as transcription regulation, programmed cell death, membrane repair, adipogenesis and innate immunity. Acts as a repressor of transcription: binds to nucleosomes and modulates chromatin structure in a manner similar to histone H1, thereby altering RNA polymerase II. Acts both as a positive and negative regulator of transcription elongation, depending on the context. Acts as a positive regulator of transcription elongation by mediating poly-ADP-ribosylation of NELFE, preventing RNA-binding activity of NELFE and relieving transcription pausing. Acts as a negative regulator of transcription elongation in response to DNA damage by catalyzing poly-ADP-ribosylation of CCNT1, disrupting the phase separation activity of CCNT1 and subsequent activation of CDK9. Involved in replication fork progression following interaction with CARM1: mediates poly-ADP-ribosylation at replication forks, slowing fork progression. Poly-ADP-ribose chains generated by PARP1 also play a role in poly-ADP-ribose-dependent cell death, a process named parthanatos. Also acts as a negative regulator of the cGAS-STING pathway. Acts by mediating poly-ADP-ribosylation of CGAS: PARP1 translocates into the cytosol following phosphorylation by PRKDC and catalyzes poly-ADP-ribosylation and inactivation of CGAS. Acts as a negative regulator of adipogenesis: catalyzes poly-ADP-ribosylation of histone H2B on 'Glu-35' (H2BE35ADPr) following interaction with NMNAT1, inhibiting phosphorylation of H2B at 'Ser-36' (H2BS36ph), thereby blocking expression of pro-adipogenetic genes. Involved in the synthesis of ATP in the nucleus, together with NMNAT1, PARG and NUDT5. Nuclear ATP generation is required for extensive chromatin remodeling events that are energy-consuming. In terms of biological role, promotes AIFM1-mediated apoptosis. This form, which translocates into the cytoplasm following cleavage by caspase-3 (CASP3) and caspase-7 (CASP7) in response to apoptosis, is auto-poly-ADP-ribosylated and serves as a poly-ADP-ribose carrier to induce AIFM1-mediated apoptosis. This cleavage form irreversibly binds to DNA breaks and interferes with DNA repair, promoting DNA damage-induced apoptosis. This Cricetulus griseus (Chinese hamster) protein is Poly [ADP-ribose] polymerase 1 (PARP1).